The primary structure comprises 215 residues: Peroxiredoxin 1 (215 aa).

A Thioredoxin domain is found at 2-158 (VKLYSKFPDV…LLRITKAAIV (157 aa)). The active-site Cysteine sulfenic acid (-SOH) intermediate is the cysteine 46. Arginine 121 is a substrate binding site.

This sequence belongs to the peroxiredoxin family. Prx6 subfamily. As to quaternary structure, homodecamer. Pentamer of dimers that assemble into a ring structure.

It is found in the cytoplasm. It carries out the reaction a hydroperoxide + [thioredoxin]-dithiol = an alcohol + [thioredoxin]-disulfide + H2O. Functionally, thiol-specific peroxidase that catalyzes the reduction of hydrogen peroxide and organic hydroperoxides to water and alcohols, respectively. Plays a role in cell protection against oxidative stress by detoxifying peroxides. This Sulfurisphaera tokodaii (strain DSM 16993 / JCM 10545 / NBRC 100140 / 7) (Sulfolobus tokodaii) protein is Peroxiredoxin 1.